The sequence spans 336 residues: Phospho-N-acetylmuramoyl-pentapeptide-transferase (336 aa).

10 consecutive transmembrane segments (helical) span residues 3–23 (LTLI…PYFI), 53–73 (GGTV…LFSI), 78–98 (SLAL…IGFL), 118–138 (LALQ…PSGI), 143–163 (VFGY…FWVV), 174–194 (GIDG…GVIA), 200–220 (FDVL…FCFN), 226–246 (VFMG…ISIA), 251–271 (WTLL…MLQV), and 316–336 (AFLW…LYVF).

The protein belongs to the glycosyltransferase 4 family. MraY subfamily. Requires Mg(2+) as cofactor.

The protein resides in the cell membrane. The enzyme catalyses UDP-N-acetyl-alpha-D-muramoyl-L-alanyl-gamma-D-glutamyl-L-lysyl-D-alanyl-D-alanine + di-trans,octa-cis-undecaprenyl phosphate = Mur2Ac(oyl-L-Ala-gamma-D-Glu-L-Lys-D-Ala-D-Ala)-di-trans,octa-cis-undecaprenyl diphosphate + UMP. It participates in cell wall biogenesis; peptidoglycan biosynthesis. Functionally, catalyzes the initial step of the lipid cycle reactions in the biosynthesis of the cell wall peptidoglycan: transfers peptidoglycan precursor phospho-MurNAc-pentapeptide from UDP-MurNAc-pentapeptide onto the lipid carrier undecaprenyl phosphate, yielding undecaprenyl-pyrophosphoryl-MurNAc-pentapeptide, known as lipid I. This chain is Phospho-N-acetylmuramoyl-pentapeptide-transferase, found in Streptococcus pyogenes serotype M3 (strain ATCC BAA-595 / MGAS315).